The chain runs to 676 residues: Envelope glycoprotein (676 aa).

Residues M1–S32 form the signal peptide. Residues I33–Q650 lie on the Extracellular side of the membrane. Residue N40 is glycosylated (N-linked (GlcNAc...) asparagine; by host). 5 cysteine pairs are disulfide-bonded: C53–C609, C108–C135, C121–C147, C511–C556, and C601–C608. Residues R54–E201 form a receptor-binding region. 11 N-linked (GlcNAc...) asparagine; by host glycosylation sites follow: N204, N228, N238, N257, N268, N296, N317, N333, N346, N386, and N413. The mucin-like region stretch occupies residues E305–T485. The span at R314 to T335 shows a compositional bias: polar residues. The disordered stretch occupies residues R314–E337. Residues T370–K478 are disordered. The span at D414 to A427 shows a compositional bias: low complexity. 3 N-linked (GlcNAc...) asparagine; by host glycosylation sites follow: N436, N454, and N462. Positions A447–T464 are enriched in polar residues. Residues G524–A539 form a fusion peptide region. Positions L554–Q595 form a coiled coil. N563 carries an N-linked (GlcNAc...) asparagine; by host glycan. Positions W615–T634 form a coiled coil. N618 is a glycosylation site (N-linked (GlcNAc...) asparagine; by host). Residues W651–I671 form a helical membrane-spanning segment. Residues C670 and C672 are each lipidated (S-palmitoyl cysteine; by host). The Cytoplasmic portion of the chain corresponds to C672–F676.

The protein belongs to the filoviruses glycoprotein family. In terms of assembly, homotrimer; each monomer consists of a GP1 and a GP2 subunit linked by disulfide bonds. The resulting peplomers (GP1,2) protrude from the virus surface as spikes. Interacts with host integrin alpha-V/ITGAV. Interacts with host CLEC10A. Binds also to host CD209 and CLEC4M/DC-SIGN(R). Interacts with host FOLR1. Interacts with BST2; this interaction inhibits the antiviral effect of BST2 and this allows viral release from infected cells. Interacts with host FCN1; this interaction enhances viral entry. Interacts with host TLR4; this interaction induces cell death in T-lymphocytes or proinflammatory cytokines and SOCS1 production in monocytes. Interacts with host entry receptor NPC1. As to quaternary structure, GP1 and GP2delta are part of GP1,2delta soluble complexes released by ectodomain shedding. Post-translationally, the signal peptide region modulates GP's high mannose glycosylation, thereby determining the efficiency of the interactions with DC-SIGN(R). In terms of processing, N-glycosylated. O-glycosylated in the mucin-like region. Post-translationally, palmitoylation of GP2 is not required for its function. In terms of processing, specific enzymatic cleavages in vivo yield mature proteins. The precursor is processed into GP1 and GP2 by host cell furin in the trans Golgi, and maybe by other host proteases, to yield the mature GP1 and GP2 proteins. The cleavage site corresponds to the furin optimal cleavage sequence [KR]-X-[KR]-R. This cleavage does not seem to be required for function. After the internalization of the virus into cell endosomes, GP1 C-terminus is removed by the endosomal proteases cathepsin B, cathepsin L, or both, leaving a 19-kDa N-terminal fragment which is further digested by cathepsin B. Proteolytic processing of GP1,2 by host ADAM17 can remove the transmembrane anchor of GP2 and leads to shedding of complexes consisting in GP1 and truncated GP2 (GP1,2delta).

Its subcellular location is the virion membrane. It is found in the host cell membrane. The protein localises to the secreted. Functionally, trimeric GP1,2 complexes form the virion surface spikes and mediate the viral entry processes, with GP1 acting as the receptor-binding subunit and GP2 as the membrane fusion subunit. At later times of infection, down-regulates the expression of various host cell surface molecules that are essential for immune surveillance and cell adhesion. Down-modulates several integrins including ITGA1, ITGA2, ITGA3, ITGA4, ITGA5, ITGA6, ITGAV and ITGB1. This decrease in cell adhesion molecules may lead to cell detachment, contributing to the disruption of blood vessel integrity and hemorrhages developed during infection (cytotoxicity). Interacts with host TLR4 and thereby stimulates the differentiation and activation of monocytes leading to bystander death of T-lymphocytes. Down-regulates as well the function of host natural killer cells. Counteracts the antiviral effect of host BST2/tetherin that restricts release of progeny virions from infected cells. However, cooperates with VP40 and host BST2 to activate canonical NF-kappa-B pathway in a manner dependent on neddylation. In terms of biological role, functions as a decoy for anti-GP1,2 antibodies thereby contributing to viral immune evasion. Interacts and activates host macrophages and dendritic cells inducing up-regulation of cytokine transcription. This effect is mediated throught activation of host TLR4. Responsible for binding to the receptor(s) on target cells. Interacts with CD209/DC-SIGN and CLEC4M/DC-SIGNR which act as cofactors for virus entry into dendritic cells (DCs) and endothelial cells. Binding to the macrophage specific lectin CLEC10A also seems to enhance virus infectivity. Interaction with FOLR1/folate receptor alpha may be a cofactor for virus entry in some cell types, although results are contradictory. Members of the Tyro3 receptor tyrosine kinase family also seem to be cell entry factors in filovirus infection. Once attached, the virions are internalized through clathrin-dependent endocytosis and/or macropinocytosis. After internalization of the virus into the endosomes of the host cell, proteolysis of GP1 by two cysteine proteases, CTSB/cathepsin B and CTSL/cathepsin L removes the glycan cap and allows GP1 binding to the host entry receptor NPC1. NPC1-binding, Ca(2+) and acidic pH induce a conformational change of GP2, which unmasks its fusion peptide and permit membranes fusion. Its function is as follows. Acts as a class I viral fusion protein. Under the current model, the protein has at least 3 conformational states: pre-fusion native state, pre-hairpin intermediate state, and post-fusion hairpin state. During viral and target cell membrane fusion, the coiled coil regions (heptad repeats) assume a trimer-of-hairpins structure, positioning the fusion peptide in close proximity to the C-terminal region of the ectodomain. The formation of this structure appears to drive apposition and subsequent fusion of viral and target cell membranes. Responsible for penetration of the virus into the cell cytoplasm by mediating the fusion of the membrane of the endocytosed virus particle with the endosomal membrane. Low pH in endosomes induces an irreversible conformational change in GP2, releasing the fusion hydrophobic peptide. This Zaire ebolavirus (strain Kikwit-95) (ZEBOV) protein is Envelope glycoprotein (GP).